The sequence spans 917 residues: MIPLPVAAANSNSNSNSNSNDEESPNLSTVIKPPLKKTKTLLPPPSSSSSNRPLHLRVSIDNNNNNNAPPPPADFSDHQWNYPSFLGTTTRKRRPSSVKPPSTSNLRFDTIPKTKTKTKTNTNTNTNTNTNTNTNTDLPPPPVPSSSPVARPQHHNHRSPPIFYLLIITCIIFVPYSSYLQYKLAKLEDHKLHLCRQSQIHFSSGHGNGKISIPIHDASFSYILSRKAALYIVLFTLILPFLLYKYLDYLPQIINFLRRTHNNKEDVPLKKRIAYMLDVFFSIYPYAKLLALLFATLFLIGFGGLALYAVTGGSLAEALWHSWTYVADSGNHAETQGTGQRVVSVSISSGGMLIFAMMLGLVSDAISEKVDSLRKGKCEVIERNHILILGWSDKLGSLLKQLAIANKSVGGGVIVVLAEKEKEEMEMDITKLEFDFMGTSVICRSGSPLILADLKKVSVSKARAIIVLASDENADQSDARALRVVLSLTGVKEGLRGHVVVEMSDLDNEPLVKLVGGELIETVVAHDVIGRLMIQCALQPGLAQIWEDILGFENAEFYIKRWPELDGLSFKDILISFPDAIPCGVKVAADGGKIVINPDDSYVMRDGDEVLVIAEDDDTYSPGSLPEVLKGFFPRIPDAPKYPEKILFCGWRRDIDDMIMVLEAFLAPGSELWMFNEVPEKEREKKLAAGGLDVFGLENIKLVHREGNAVIRRHLESLPLETFDSILILADESVEDSVAHSDSRSLATLLLIRDIQSRRLPYKDTKSTSLRLSGFSHNSWIREMQQASDKSIIISEILDSRTRNLVSVSRISDYVLSNELVSMALAMVAEDKQINRVLEELFAEQGNEMCIKPAEFYLFDQEELCFYDIMIRGRARQEIIIGYRLANQERAIINPSEKLVARKWSLGDVFVVIASGD.

The segment at 1–154 is disordered; the sequence is MIPLPVAAAN…SSSPVARPQH (154 aa). Residues 7–19 show a composition bias toward low complexity; that stretch reads AAANSNSNSNSNS. Positions 78–89 are enriched in polar residues; sequence HQWNYPSFLGTT. The segment covering 119–136 has biased composition (low complexity); the sequence is KTNTNTNTNTNTNTNTNT. Transmembrane regions (helical) follow at residues 160–180, 230–250, 290–310, and 342–362; these read PPIF…SSYL, LYIV…LDYL, LALL…LYAV, and VVSV…LGLV. 2 consecutive RCK N-terminal domains span residues 383-524 and 643-792; these read RNHI…ETVV and PEKI…DKSI. Residues 413–435 adopt a coiled-coil conformation; that stretch reads VIVVLAEKEKEEMEMDITKLEFD.

Belongs to the castor/pollux (TC 1.A.1.23) family. Homooligomer. As to expression, mainly expressed in nodules. Also detected in infected and uninfected roots, leaves, seed pods, and flower buds.

The protein resides in the nucleus membrane. Functionally, ion channel with permeability for potassium. Involved in perinuclear calcium spiking but not in cytosolic calcium influx. Required for early signal transduction events leading to endosymbiosis. Acts early in a signal transduction chain leading from the perception of Nod factor to the activation of calcium spiking. Also involved in fungal entry into root epidermal cells during the establishment of the arbuscular mycorrhizal symbiosis. This Lotus japonicus (Lotus corniculatus var. japonicus) protein is Ion channel POLLUX (POLLUX).